The following is a 137-amino-acid chain: Large ribosomal subunit protein uL16 (137 aa).

The segment covering 1–17 (MLSPKRTKFRKQQRGRM) has biased composition (basic residues). The disordered stretch occupies residues 1 to 24 (MLSPKRTKFRKQQRGRMRGNANSG).

This sequence belongs to the universal ribosomal protein uL16 family. As to quaternary structure, part of the 50S ribosomal subunit.

In terms of biological role, binds 23S rRNA and is also seen to make contacts with the A and possibly P site tRNAs. This is Large ribosomal subunit protein uL16 from Trichodesmium erythraeum (strain IMS101).